Reading from the N-terminus, the 662-residue chain is PsbB mRNA maturation factor Mbb1, chloroplastic (662 aa).

A chloroplast-targeting transit peptide spans 1-50 (MSLVPFSQLWRGVRTRGPVEQASSSSSSSSSSRRTWYAPARSQTGVQVAA). Disordered stretches follow at residues 14–38 (RTRGPVEQASSSSSSSSSSRRTWYA) and 75–101 (IIADLSSSGSGDGEGERGDATGSRDEA). The span at 23 to 32 (SSSSSSSSSS) shows a compositional bias: low complexity. The span at 88-101 (EGERGDATGSRDEA) shows a compositional bias: basic and acidic residues. TPR repeat units follow at residues 126–160 (SRIRARQTLDLNERKSLYKAAEDGLRRCLALDPAD), 161–194 (PRAYVVLGKTLVQQKRYDEARQLYQDGCANTGNV), 196–229 (PYIWSAWGWLEARTGNVERARKLYDAAVVVDGTH), 231–263 (CAWHKWGMLEKGQGNFTRARDLWMQGIQRCRRK), 269–302 (AYLYNALGCMAAQLGRVGEARSWFEEGTRSAEGA), 305–338 (VALWQAWAVLEAKQGDPTVVRYLFRKALGANPRS), 339–372 (RYVHLAWALWERRQGNPQHCLALLRRGCELNPTD), 373–406 (PALYQAWALVEKQAGRIERARELFEQGLRADPSD), 408–440 (YMWQAYGVMEAEQGNMDRARQLFQEGVWADPRS), and 444–477 (VYVFHAWGALEWQAGNVQTARELFKAAVRVDPKS). Disordered regions lie at residues 540 to 563 (SDGNGSSSSNGGAGGQQAGSEAAA) and 598 to 662 (LPDF…RSMG).

Part of a 300 kDa complex that associates with RNA.

It localises to the plastid. The protein localises to the chloroplast stroma. Its function is as follows. Involved, directly or indirectly, in the processing of the chloroplast encoded psbB mRNA to its mature form, acting via the 5'-UTR of the psbB mRNA. The sequence is that of PsbB mRNA maturation factor Mbb1, chloroplastic (MBB1) from Chlamydomonas reinhardtii (Chlamydomonas smithii).